The sequence spans 1253 residues: Myosin heavy chain 95F (1253 aa).

The 52-residue stretch at 3–54 (EDTQLVWVRDAAEGYIQGRITEIGAKEFEVTPTDRKYPKRTCHFDDIHSSCD) folds into the Myosin N-terminal SH3-like domain. In terms of domain architecture, Myosin motor spans 57–766 (QDHDDNCELM…KFVEFDRIMR (710 aa)). 151–158 (GESGAGKT) serves as a coordination point for ATP. Residues 647–666 (GELMEKLEQNGTNFIRCIKP) form an actin-binding region. Residues 808-837 (RNKCVLIAQRIARGFLARKQHRPRYQGIGK) form the IQ domain. The stretch at 900–1022 (ANMNKLTVDL…LRLANESNGQ (123 aa)) forms a coiled coil. A hydrophobic region region spans residues 1187–1193 (PILLVAG). A disordered region spans residues 1233-1253 (AYKNLGAAKPNGPAAAMQKQQ).

It belongs to the TRAFAC class myosin-kinesin ATPase superfamily. Myosin family. In terms of tissue distribution, isoform B is present at a higher level in the head and gonads than in the thoraxes. Isoform 145 kDa is found only in the head. CLIP-190 and jar are coexpressed at several times in development and in a number of tissues, including embryonic axonal neuron processes and posterior pole.

The protein resides in the cytoplasm. The protein localises to the cytoskeleton. In terms of biological role, myosin is a protein that binds to actin and has ATPase activity that is activated by actin. Together CLIP-190 and jar may coordinate the interaction between the actin and microtubule cytoskeleton. May link endocytic vesicles to microtubules and may be involved in transport in the early embryo and in the dynamic process of dorsal closure. It is believed that its function changes during the life cycle. This chain is Myosin heavy chain 95F (jar), found in Drosophila melanogaster (Fruit fly).